The sequence spans 486 residues: CREB-regulated transcription coactivator 1 homolog (486 aa).

Residues 1 to 62 (MSNSNTPRKF…APMPIPQQGL (62 aa)) are disordered. Residues 9–23 (KFSEKIAILERKQNE) are compositionally biased toward basic and acidic residues. Positions 34–52 (QVQSITHHPTDSSGSSTAT) are enriched in polar residues. Phosphoserine; by AMPK is present on Ser76. Positions 103–166 (PIQGHRSRSP…PPYNQPGQLV (64 aa)) are disordered. Positions 144 to 160 (RTPPQHPQYTPYGPPYN) are enriched in pro residues. The residue at position 179 (Ser179) is a Phosphoserine; by AMPK. Disordered regions lie at residues 214-278 (SMPG…QSPN), 327-417 (FNQD…SNSP), and 460-486 (APPQ…MLQN). 3 stretches are compositionally biased toward polar residues: residues 224–245 (PNSQ…QGSP), 387–402 (PESQ…QLDP), and 461–475 (PPQT…NNSF).

This sequence belongs to the TORC family. Interacts with crh-1. In terms of processing, phosphorylated by AMPK at Ser-76 and Ser-179. Dephosphorylated by tax-6, the catalytic subunit of calcineurin. In terms of tissue distribution, expressed throughout the intestine and in head and tail neurons. Expressed in octopaminergic RIC neurons.

Its subcellular location is the nucleus. The protein resides in the cytoplasm. The protein localises to the cytosol. Transcriptional coactivator for crh-1, the homolog of vertebrate transcription factor CREB1. Regulates the transcription of metabolic genes and may have a role in mitochondrial dynamics and metabolism. Involved in modulation of lifespan. Through crh-1, counteracts the pro-lifespan-extension signals of AMPK both cell autonomously and, when expressed in neurons, at a systemic level, possibly using the catecholamine analog, octopamine, as a messenger. In Caenorhabditis elegans, this protein is CREB-regulated transcription coactivator 1 homolog.